The chain runs to 434 residues: ATP-dependent RNA helicase RhlB (434 aa).

The short motif at 9-37 is the Q motif element; that stretch reads KKFADFPLKPEILAALNENGFEFCTPIQA. The region spanning 40 to 219 is the Helicase ATP-binding domain; it reads LPILLNAKDI…YDHMNDPEKV (180 aa). 53–60 serves as a coordination point for ATP; the sequence is AQTGTGKT. Residues 165–168 carry the DEAD box motif; it reads DEAD. Residues 243–390 enclose the Helicase C-terminal domain; the sequence is KMRLLLSLIE…VSNYDKDALL (148 aa). Positions 390-434 are disordered; that stretch reads LDDIPPPARIHRKPPTSRTRDGGSKGAHRSGGNTSRPPRHRTRRP.

Belongs to the DEAD box helicase family. RhlB subfamily. Component of the RNA degradosome, which is a multiprotein complex involved in RNA processing and mRNA degradation.

The protein localises to the cytoplasm. It catalyses the reaction ATP + H2O = ADP + phosphate + H(+). DEAD-box RNA helicase involved in RNA degradation. Has RNA-dependent ATPase activity and unwinds double-stranded RNA. The sequence is that of ATP-dependent RNA helicase RhlB from Shewanella frigidimarina (strain NCIMB 400).